A 365-amino-acid polypeptide reads, in one-letter code: 2-aminoethylphosphonate--pyruvate transaminase (365 aa).

Lysine 194 is subject to N6-(pyridoxal phosphate)lysine.

It belongs to the class-V pyridoxal-phosphate-dependent aminotransferase family. PhnW subfamily. As to quaternary structure, homodimer. Pyridoxal 5'-phosphate is required as a cofactor.

The enzyme catalyses (2-aminoethyl)phosphonate + pyruvate = phosphonoacetaldehyde + L-alanine. Involved in phosphonate degradation. The chain is 2-aminoethylphosphonate--pyruvate transaminase from Bacillus cereus (strain AH187).